We begin with the raw amino-acid sequence, 550 residues long: Arginine--tRNA ligase (550 aa).

The short motif at 130-140 (ANPTGPIHIGG) is the 'HIGH' region element.

Belongs to the class-I aminoacyl-tRNA synthetase family. As to quaternary structure, monomer.

The protein localises to the cytoplasm. The enzyme catalyses tRNA(Arg) + L-arginine + ATP = L-arginyl-tRNA(Arg) + AMP + diphosphate. The chain is Arginine--tRNA ligase (argS) from Mycolicibacterium smegmatis (strain ATCC 700084 / mc(2)155) (Mycobacterium smegmatis).